Consider the following 200-residue polypeptide: uncharacterized protein (200 aa).

This is an uncharacterized protein from Methanocaldococcus jannaschii (strain ATCC 43067 / DSM 2661 / JAL-1 / JCM 10045 / NBRC 100440) (Methanococcus jannaschii).